The chain runs to 868 residues: Sporulation-specific protein 75 (868 aa).

At Met-1–Gly-34 the chain is on the extracellular side. Asn-2 carries N-linked (GlcNAc...) asparagine glycosylation. A helical transmembrane segment spans residues Phe-35–Ile-55. The Cytoplasmic portion of the chain corresponds to Leu-56–Lys-127. The helical transmembrane segment at Leu-128–His-148 threads the bilayer. Over Tyr-149–Asn-187 the chain is Extracellular. N-linked (GlcNAc...) asparagine glycosylation occurs at Asn-184. The helical transmembrane segment at Thr-188–Ser-208 threads the bilayer. Residues Ser-209–Arg-481 are Cytoplasmic-facing. The chain crosses the membrane as a helical span at residues Ile-482–Pro-502. N-linked (GlcNAc...) asparagine glycosylation is present at Asn-503. Residues Asn-503–Asn-527 are Extracellular-facing. The chain crosses the membrane as a helical span at residues Leu-528–Leu-548. Topologically, residues Ser-549–Phe-569 are cytoplasmic. Residues Val-570–Ile-590 traverse the membrane as a helical segment. The Extracellular portion of the chain corresponds to Glu-591–Cys-611. The helical transmembrane segment at Ala-612 to Leu-632 threads the bilayer. The Cytoplasmic segment spans residues Arg-633–Thr-660. A helical transmembrane segment spans residues Ser-661 to Tyr-683. Topologically, residues Ser-684–Leu-692 are extracellular. Residues Leu-693 to Tyr-713 form a helical membrane-spanning segment. Over Asn-714–Leu-730 the chain is Cytoplasmic. The chain crosses the membrane as a helical span at residues Met-731–Phe-751. Residues Asp-752–Gln-753 lie on the Extracellular side of the membrane. Residues Tyr-754–Ile-774 traverse the membrane as a helical segment. Over Ser-775–His-868 the chain is Cytoplasmic.

Belongs to the CSC1 (TC 1.A.17) family.

The protein resides in the membrane. Functionally, acts as an osmosensitive calcium-permeable cation channel. Required for spore wall assembly and ascus formation. The sequence is that of Sporulation-specific protein 75 (SPO75) from Saccharomyces cerevisiae (strain ATCC 204508 / S288c) (Baker's yeast).